Here is a 208-residue protein sequence, read N- to C-terminus: Large ribosomal subunit protein uL4 (208 aa).

The interval 46-97 is disordered; that stretch reads QGTHKTKTRAEVRGGGKKPYRQKGTGNARQGSSRSPIMVGGGTIFGPQPRSY. Over residues 69-80 the composition is skewed to polar residues; the sequence is GTGNARQGSSRS.

Belongs to the universal ribosomal protein uL4 family. As to quaternary structure, part of the 50S ribosomal subunit.

One of the primary rRNA binding proteins, this protein initially binds near the 5'-end of the 23S rRNA. It is important during the early stages of 50S assembly. It makes multiple contacts with different domains of the 23S rRNA in the assembled 50S subunit and ribosome. Functionally, forms part of the polypeptide exit tunnel. The polypeptide is Large ribosomal subunit protein uL4 (Chlorobaculum parvum (strain DSM 263 / NCIMB 8327) (Chlorobium vibrioforme subsp. thiosulfatophilum)).